Consider the following 342-residue polypeptide: Holliday junction branch migration complex subunit RuvB (342 aa).

Residues 1 to 179 (MTNILSPEKS…FGIPMRLNFY (179 aa)) form a large ATPase domain (RuvB-L) region. ATP-binding positions include Ile18, Arg19, Gly60, Lys63, Thr64, Thr65, 126 to 128 (EDF), Arg169, Tyr179, and Arg216. Mg(2+) is bound at residue Thr64. The segment at 180 to 250 (NTEELKQVLN…ICDFGLKRLT (71 aa)) is small ATPAse domain (RuvB-S). The segment at 253-342 (SIGLDSNDYR…NQLNILNENE (90 aa)) is head domain (RuvB-H). Residues Arg289, Arg308, and Arg313 each coordinate DNA.

The protein belongs to the RuvB family. Homohexamer. Forms an RuvA(8)-RuvB(12)-Holliday junction (HJ) complex. HJ DNA is sandwiched between 2 RuvA tetramers; dsDNA enters through RuvA and exits via RuvB. An RuvB hexamer assembles on each DNA strand where it exits the tetramer. Each RuvB hexamer is contacted by two RuvA subunits (via domain III) on 2 adjacent RuvB subunits; this complex drives branch migration. In the full resolvosome a probable DNA-RuvA(4)-RuvB(12)-RuvC(2) complex forms which resolves the HJ.

It is found in the cytoplasm. The catalysed reaction is ATP + H2O = ADP + phosphate + H(+). Functionally, participates in UV-tolerance of Synechocystis PCC 6803. The RuvA-RuvB-RuvC complex processes Holliday junction (HJ) DNA during genetic recombination and DNA repair, while the RuvA-RuvB complex plays an important role in the rescue of blocked DNA replication forks via replication fork reversal (RFR). RuvA specifically binds to HJ cruciform DNA, conferring on it an open structure. The RuvB hexamer acts as an ATP-dependent pump, pulling dsDNA into and through the RuvAB complex. RuvB forms 2 homohexamers on either side of HJ DNA bound by 1 or 2 RuvA tetramers; 4 subunits per hexamer contact DNA at a time. Coordinated motions by a converter formed by DNA-disengaged RuvB subunits stimulates ATP hydrolysis and nucleotide exchange. Immobilization of the converter enables RuvB to convert the ATP-contained energy into a lever motion, pulling 2 nucleotides of DNA out of the RuvA tetramer per ATP hydrolyzed, thus driving DNA branch migration. The RuvB motors rotate together with the DNA substrate, which together with the progressing nucleotide cycle form the mechanistic basis for DNA recombination by continuous HJ branch migration. Branch migration allows RuvC to scan DNA until it finds its consensus sequence, where it cleaves and resolves cruciform DNA. In Rickettsia prowazekii (strain Madrid E), this protein is Holliday junction branch migration complex subunit RuvB.